A 375-amino-acid polypeptide reads, in one-letter code: G-protein coupled estrogen receptor 1 (375 aa).

N-acetylmethionine is present on methionine 1. Residues 1–62 (MDATTPAQTV…QQYVIALFLS (62 aa)) are Extracellular-facing. Residues asparagine 32 and asparagine 44 are each glycosylated (N-linked (GlcNAc...) asparagine). Residues 63 to 84 (CLYTIFLFPIGFVGNILILVVN) traverse the membrane as a helical segment. At 85–96 (ISFREKMTIPDL) the chain is on the cytoplasmic side. A helical transmembrane segment spans residues 97 to 120 (YFINLAAADLILVADSLIEVFNLD). Over 121-132 (EQYYDIAVLCTF) the chain is Extracellular. Cysteine 130 and cysteine 207 form a disulfide bridge. A helical membrane pass occupies residues 133–153 (MSLFLQINMYSSVFFLTWMSF). At 154–175 (DRYLALAKAMRCGLFRTKHHAR) the chain is on the cytoplasmic side. A helical membrane pass occupies residues 176–194 (LSCGLIWMASVSATLVPFT). Residues 195-220 (AVHLRHTEEACFCFADVREVQWLEVT) lie on the Extracellular side of the membrane. Residues 221–236 (LGFIMPFAIIGLCYSL) form a helical membrane-spanning segment. Over 237 to 259 (IVRALIRAHRHRGLRPRRQKALR) the chain is Cytoplasmic. The helical transmembrane segment at 260-280 (MIFAVVLVFFICWLPENVFIS) threads the bilayer. At 281–306 (VHLLQWTQPGDTPCKQSFRHAYPLTG) the chain is on the extracellular side. The helical transmembrane segment at 307 to 327 (HIVNLAAFSNSCLNPLIYSFL) threads the bilayer. The Cytoplasmic portion of the chain corresponds to 328-375 (GETFRDKLRLYVEQKTSLPALNRFCHATLKAVIPDSTEQSEVRFSSAV).

The protein belongs to the G-protein coupled receptor 1 family. As to quaternary structure, interacts with RAMP3; the interaction confers proper subcellular localization and function in cardioprotection. Interacts with KRT7 and KRT8. Interacts with EGFR; the interaction increases after agonist-induced stimulation in cancer-associated fibroblasts (CAF). Interacts with EGFR and ESR1. Interacts (via C-terminus tail motif) with DLG4 (via N-terminus tandem pair of PDZ domains); the interaction is direct and induces the increase of GPER1 protein levels residing at the plasma membrane surface in a estradiol-independent manner. Homodimer. Heterodimer; heterodimerizes with other G-protein-coupled receptor (GPCRs) like CRHR1, HTR1A and PAQR8. Post-translationally, ubiquitinated; ubiquitination occurs at the plasma membrane and leads to proteasome-mediated degradation. N-glycosylated. Expressed in brain, heart, spleen, preadipocytes, mature adipocytes and primary hippocampal neurons. Expressed in neurons of the hippocampus, hypothalamic paraventricular nucleus (PVH), supraoptic nucleus (SON) and the median eminence. Expressed in the nucleus ambiguous (at protein level). Expressed in brain, pituitary gland, adrenal medulla, renal pelvis, ovary, endothelial cells, visceral fat tissues and islets of Langerhans.

It is found in the nucleus. It localises to the cytoplasm. The protein localises to the perinuclear region. The protein resides in the cytoskeleton. Its subcellular location is the cell membrane. It is found in the endoplasmic reticulum membrane. It localises to the golgi apparatus membrane. The protein localises to the cell projection. The protein resides in the dendrite. Its subcellular location is the cytoplasmic vesicle membrane. It is found in the early endosome. It localises to the recycling endosome. The protein localises to the golgi apparatus. The protein resides in the trans-Golgi network. Its subcellular location is the dendritic spine membrane. It is found in the axon. It localises to the postsynaptic density. The protein localises to the mitochondrion membrane. Functionally, G-protein coupled estrogen receptor that binds to 17-beta-estradiol (E2) with high affinity, leading to rapid and transient activation of numerous intracellular signaling pathways. Stimulates cAMP production, calcium mobilization and tyrosine kinase Src inducing the release of heparin-bound epidermal growth factor (HB-EGF) and subsequent transactivation of the epidermal growth factor receptor (EGFR), activating downstream signaling pathways such as PI3K/Akt and ERK/MAPK. Mediates pleiotropic functions among others in the cardiovascular, endocrine, reproductive, immune and central nervous systems. Has a role in cardioprotection by reducing cardiac hypertrophy and perivascular fibrosis in a RAMP3-dependent manner. Regulates arterial blood pressure by stimulating vasodilation and reducing vascular smooth muscle and microvascular endothelial cell proliferation. Plays a role in blood glucose homeostasis contributing to the insulin secretion response by pancreatic beta cells. Triggers mitochondrial apoptosis during pachytene spermatocyte differentiation. Stimulates uterine epithelial cell proliferation. Enhances uterine contractility in response to oxytocin. Contributes to thymic atrophy by inducing apoptosis. Attenuates TNF-mediated endothelial expression of leukocyte adhesion molecules. Promotes neuritogenesis in developing hippocampal neurons. Plays a role in acute neuroprotection against NMDA-induced excitotoxic neuronal death. Increases firing activity and intracellular calcium oscillations in luteinizing hormone-releasing hormone (LHRH) neurons. Inhibits early osteoblast proliferation at growth plate during skeletal development. Inhibits mature adipocyte differentiation and lipid accumulation. Involved in the recruitment of beta-arrestin 2 ARRB2 at the plasma membrane in epithelial cells. Also functions as a receptor for aldosterone mediating rapid regulation of vascular contractibility through the PI3K/ERK signaling pathway. Involved in cancer progression regulation. Stimulates cancer-associated fibroblast (CAF) proliferation by a rapid genomic response through the EGFR/ERK transduction pathway. Associated with EGFR, may act as a transcription factor activating growth regulatory genes (c-fos, cyclin D1). Promotes integrin alpha-5/beta-1 and fibronectin (FN) matrix assembly in breast cancer cells. The protein is G-protein coupled estrogen receptor 1 (Gper1) of Mus musculus (Mouse).